The chain runs to 129 residues: MMPKTIITPPGSGTPLAPFSPGTLADGVMYVSGTLAFDKQNNVVHIGDAAGQTRHVLETIKSVIETAGGSLDDITFNSIFLTDWQHYAAINQVYAEYFPGDKPARFCIQCGLVKPDALIEIASVAHLPR.

This sequence belongs to the RutC family.

It carries out the reaction (Z)-3-aminoacrylate + H2O + H(+) = 3-oxopropanoate + NH4(+). In terms of biological role, involved in pyrimidine catabolism. Catalyzes the deamination of 3-aminoacrylate to malonic semialdehyde, a reaction that can also occur spontaneously. RutC may facilitate the reaction and modulate the metabolic fitness, rather than catalyzing essential functions. The chain is 3-aminoacrylate deaminase RutC from Yersinia enterocolitica serotype O:8 / biotype 1B (strain NCTC 13174 / 8081).